Reading from the N-terminus, the 556-residue chain is Dihydroxy-acid dehydratase (556 aa).

Cysteine 47 serves as a coordination point for [2Fe-2S] cluster. A Mg(2+)-binding site is contributed by aspartate 79. Cysteine 120 contacts [2Fe-2S] cluster. Mg(2+)-binding residues include aspartate 121 and lysine 122. Position 122 is an N6-carboxylysine (lysine 122). Cysteine 192 serves as a coordination point for [2Fe-2S] cluster. Glutamate 444 is a binding site for Mg(2+). Serine 470 functions as the Proton acceptor in the catalytic mechanism.

The protein belongs to the IlvD/Edd family. As to quaternary structure, homodimer. It depends on [2Fe-2S] cluster as a cofactor. Mg(2+) is required as a cofactor.

The catalysed reaction is (2R)-2,3-dihydroxy-3-methylbutanoate = 3-methyl-2-oxobutanoate + H2O. It carries out the reaction (2R,3R)-2,3-dihydroxy-3-methylpentanoate = (S)-3-methyl-2-oxopentanoate + H2O. Its pathway is amino-acid biosynthesis; L-isoleucine biosynthesis; L-isoleucine from 2-oxobutanoate: step 3/4. It participates in amino-acid biosynthesis; L-valine biosynthesis; L-valine from pyruvate: step 3/4. Functions in the biosynthesis of branched-chain amino acids. Catalyzes the dehydration of (2R,3R)-2,3-dihydroxy-3-methylpentanoate (2,3-dihydroxy-3-methylvalerate) into 2-oxo-3-methylpentanoate (2-oxo-3-methylvalerate) and of (2R)-2,3-dihydroxy-3-methylbutanoate (2,3-dihydroxyisovalerate) into 2-oxo-3-methylbutanoate (2-oxoisovalerate), the penultimate precursor to L-isoleucine and L-valine, respectively. This chain is Dihydroxy-acid dehydratase, found in Prochlorococcus marinus (strain MIT 9211).